Consider the following 903-residue polypeptide: FIGNL1-interacting regulator of recombination and mitosis (903 aa).

Phosphoserine is present on residues S101 and S795. Residue K843 is modified to N6-acetyllysine.

Interacts (via its N-terminal region) with PLK1; controls PLK1 kinase activity. Interacts (via the KVVXF motif) with PPP1CC; controls PLK1 kinase activity. Interacts with FIGNL1; may regulate homologous recombination. Post-translationally, phosphorylation at Ser-101 by PLK1 strengthens FIRRM-PLK1 interaction. Phosphorylation at Ser-795 by PLK1 negatively regulates its interaction with PPP1CC.

Its subcellular location is the chromosome. The protein localises to the centromere. It localises to the kinetochore. The protein resides in the nucleus. It is found in the midbody. Its subcellular location is the cytoplasm. The protein localises to the cytoskeleton. It localises to the spindle. Functionally, regulates PLK1 kinase activity at kinetochores and promotes faithful chromosome segregation in prometaphase by bridging kinase and phosphatase activities. Phosphorylation of FIRRM by PLK1 negatively regulates its interaction with the phosphatase, PPP1CC, thus creating a negative feedback loop for maintaining proper PLK1 kinase activity during mitosis. In complex with FIGL1 may regulate homologous recombination. The sequence is that of FIGNL1-interacting regulator of recombination and mitosis from Mus musculus (Mouse).